Here is a 101-residue protein sequence, read N- to C-terminus: UPF0235 protein Cphamn1_2066 (101 aa).

This sequence belongs to the UPF0235 family.

This chain is UPF0235 protein Cphamn1_2066, found in Chlorobium phaeobacteroides (strain BS1).